We begin with the raw amino-acid sequence, 311 residues long: Protoheme IX farnesyltransferase (311 aa).

9 consecutive transmembrane segments (helical) span residues 32 to 52 (VMSLVVFTALVGLVVSPVSIN), 53 to 73 (PWYGFLAILCIAIGGGGAGVL), 104 to 124 (FVFGMVLSMLSVLMMGKFINW), 125 to 145 (FAALLLAFTIFFYIVIYTIWL), 153 to 173 (IVIGGAAGAFPPMIGCAAATG), 180 to 200 (FLLFLIIFMWTPPHFWSLSLF), 224 to 244 (KQILFYTILMTISAAGPFIID), 245 to 265 (FAGIFYAIFSTILSVIFIYFA), and 290 to 310 (FYLAAIFGILLIEFLVWYFII).

The protein belongs to the UbiA prenyltransferase family. Protoheme IX farnesyltransferase subfamily.

It is found in the cell inner membrane. It catalyses the reaction heme b + (2E,6E)-farnesyl diphosphate + H2O = Fe(II)-heme o + diphosphate. It participates in porphyrin-containing compound metabolism; heme O biosynthesis; heme O from protoheme: step 1/1. Its function is as follows. Converts heme B (protoheme IX) to heme O by substitution of the vinyl group on carbon 2 of heme B porphyrin ring with a hydroxyethyl farnesyl side group. This is Protoheme IX farnesyltransferase from Bartonella quintana (strain Toulouse) (Rochalimaea quintana).